A 377-amino-acid chain; its full sequence is Cytochrome b (377 aa).

Helical transmembrane passes span 36–56 (WGSL…FLAM), 80–102 (WLIR…LHMA), 115–135 (VWLI…MGYI), and 181–201 (FFVL…IHLI). Heme b-binding residues include H86 and H100. 2 residues coordinate heme b: H185 and H199. H204 lines the a ubiquinone pocket. Helical transmembrane passes span 227-247 (YSSK…VIIF), 291-311 (LGGV…PFIS), 326-346 (LFWS…MPVV), and 354-374 (LTST…FLMI).

This sequence belongs to the cytochrome b family. As to quaternary structure, the main subunits of complex b-c1 are: cytochrome b, cytochrome c1 and the Rieske protein. The cofactor is heme b.

The protein resides in the mitochondrion inner membrane. Functionally, component of the ubiquinol-cytochrome c reductase complex (complex III or cytochrome b-c1 complex) that is part of the mitochondrial respiratory chain. The b-c1 complex mediates electron transfer from ubiquinol to cytochrome c. Contributes to the generation of a proton gradient across the mitochondrial membrane that is then used for ATP synthesis. This is Cytochrome b (mt:Cyt-b) from Myzostoma seymourcollegiorum (Polychaete worm).